Here is a 90-residue protein sequence, read N- to C-terminus: Large ribosomal subunit protein bL31B (90 aa).

Belongs to the bacterial ribosomal protein bL31 family. Type B subfamily. In terms of assembly, part of the 50S ribosomal subunit.

The chain is Large ribosomal subunit protein bL31B from Pseudomonas fluorescens (strain SBW25).